The primary structure comprises 73 residues: UPF0346 protein SH1485 (73 aa).

Belongs to the UPF0346 family.

The sequence is that of UPF0346 protein SH1485 from Staphylococcus haemolyticus (strain JCSC1435).